Consider the following 44-residue polypeptide: Photosystem I reaction center subunit IX (44 aa).

Residues 9 to 29 (FVRSAPVVAAIWLSLTAGIII) form a helical membrane-spanning segment.

Belongs to the PsaJ family.

Its subcellular location is the cellular thylakoid membrane. In terms of biological role, may help in the organization of the PsaE and PsaF subunits. This is Photosystem I reaction center subunit IX from Prochlorococcus marinus (strain MIT 9301).